A 122-amino-acid chain; its full sequence is Large ribosomal subunit protein uL14c (122 aa).

Belongs to the universal ribosomal protein uL14 family. As to quaternary structure, part of the 50S ribosomal subunit.

It localises to the plastid. The protein resides in the chloroplast. In terms of biological role, binds to 23S rRNA. This Porphyra purpurea (Red seaweed) protein is Large ribosomal subunit protein uL14c.